The following is a 430-amino-acid chain: GTPase Obg (430 aa).

An Obg domain is found at 1–158; the sequence is MFVDQVKISL…LDVSLELKLL (158 aa). The tract at residues 118–145 is disordered; the sequence is KGGRGGRGNSRFATPRNPAPDFSEKGEP. The OBG-type G domain occupies 159–329; the sequence is ADVGLVGFPS…LLYAIADKLE (171 aa). GTP-binding positions include 165-172, 190-194, 212-215, 282-285, and 310-312; these read GFPSVGKS, FTTIK, DLPG, NKMD, and STI. S172 and T192 together coordinate Mg(2+). The OCT domain maps to 352–430; that stretch reads KHTPSQDKFT…ILGGEFEFVE (79 aa).

The protein belongs to the TRAFAC class OBG-HflX-like GTPase superfamily. OBG GTPase family. In terms of assembly, monomer. It depends on Mg(2+) as a cofactor.

Its subcellular location is the cytoplasm. An essential GTPase which binds GTP, GDP and possibly (p)ppGpp with moderate affinity, with high nucleotide exchange rates and a fairly low GTP hydrolysis rate. Plays a role in control of the cell cycle, stress response, ribosome biogenesis and in those bacteria that undergo differentiation, in morphogenesis control. This chain is GTPase Obg, found in Staphylococcus aureus (strain COL).